The sequence spans 654 residues: U-box domain-containing protein 12 (654 aa).

The U-box domain occupies I255–E329. The segment at E329–D352 is disordered. Residues S337–A349 show a composition bias toward low complexity. 5 ARM repeats span residues N387 to I427, E430 to V469, D471 to I510, Q512 to S551, and P553 to S592.

It catalyses the reaction S-ubiquitinyl-[E2 ubiquitin-conjugating enzyme]-L-cysteine + [acceptor protein]-L-lysine = [E2 ubiquitin-conjugating enzyme]-L-cysteine + N(6)-ubiquitinyl-[acceptor protein]-L-lysine.. Its pathway is protein modification; protein ubiquitination. In terms of biological role, functions as an E3 ubiquitin ligase. In Arabidopsis thaliana (Mouse-ear cress), this protein is U-box domain-containing protein 12 (PUB12).